Here is a 63-residue protein sequence, read N- to C-terminus: Omega-conotoxin Eu1.6 (63 aa).

The signal sequence occupies residues 1-21 (MGMRMMFTVFLLVVLATTVVS). Positions 22–47 (FTSDRAPDGRNAAAKAFGLITPTVRK) are excised as a propeptide. Intrachain disulfides connect Cys-49/Cys-55 and Cys-50/Cys-63. A ser-Xaa-Pro motif, crucial for potent interaction with nAChR region spans residues 51-53 (SNP).

It belongs to the conotoxin A superfamily. In terms of tissue distribution, expressed by the venom duct.

Its subcellular location is the secreted. Its function is as follows. This amidated peptide potently and teversibly inhibits Cav2.2/CACNA1B. Steady-state inactivation is enhanced at hyperpolarized membrane potentials. Also shows a weak interaction at alpha-3-beta-4/ CHRNA3-CHRNB4 and alpha-7/CHRNA7 nAChRs subtypes. In vivo, exhibits a potent analgesic activity in rat partial sciatic nerve injury and chronic constriction injury models. In Conus eburneus (Ivory cone), this protein is Omega-conotoxin Eu1.6.